The following is a 356-amino-acid chain: Protein RecA (356 aa).

67-74 lines the ATP pocket; that stretch reads GPESSGKT.

The protein belongs to the RecA family.

The protein localises to the cytoplasm. Functionally, can catalyze the hydrolysis of ATP in the presence of single-stranded DNA, the ATP-dependent uptake of single-stranded DNA by duplex DNA, and the ATP-dependent hybridization of homologous single-stranded DNAs. It interacts with LexA causing its activation and leading to its autocatalytic cleavage. In Yersinia pestis (strain Pestoides F), this protein is Protein RecA.